Here is a 116-residue protein sequence, read N- to C-terminus: U16-barytoxin-Tl1a (116 aa).

A signal peptide spans 1 to 20 (MKTIIVFLSLLVLATKFGDA). Residues 21–74 (KEGVNQKQKKEVTQNEFREEYLNEMAAMSLVQQLEAIERALFENEAGRNSRQKR) constitute a propeptide that is removed on maturation. Cystine bridges form between C75/C90, C82/C95, and C89/C110.

It belongs to the neurotoxin 14 (magi-1) family. 06 (ICK-Trit) subfamily. As to expression, expressed by the venom gland.

The protein localises to the secreted. Ion channel inhibitor. This is U16-barytoxin-Tl1a from Trittame loki (Brush-footed trapdoor spider).